A 1081-amino-acid polypeptide reads, in one-letter code: MAAFDNPVFNKTLTPVAGAGPNFRATYYTSVTEFTHVCPRSLIDGERLGTSVGKVADPPRFTVDDRTVDMFSHDHGAWPMRMEHWPGTSAERRRDKNALRFHEFHVYDIIEAHETAQSCSAWLHPRFMETLRPSGTVVTLLGMSACGKRVAVHVYGQQPYFYAKKSEIDASIGISTPGELAHAMAASLRSAASRRSTFVEATAESFVIDVVQRRDIYYYESREEEYYRVKSCSAKYISFLCDNFCRGVKKYEGGIDATTRFAVDNELFTFGWYRFKPCAGAIQIRDVTRHSTSANVEVNCTVENLEVIRGRADWPDYKLLSFDIECKAGGANDLAFPTAERIEDVVIQISAVVSSLLTRRVEHEILFSLGTCQLPEDIADHVKVCECGSEFELLLCFMTFLKQFSPEFVTGYNILGFDWGFMYNKMVNIYGMRLDGYGKANAWGTFKVQDMPHSGRGKFRNVKINGIVNFDMFSIIYQKIKLCSYKLNSVAETVLGEKKHDLSYKDLPRLFALGPEERGKIGAYCLQDSRLATKLFFKLVPHMELSAVAQLACITLTRAVFDGQQVRVFTCLLQRARKIGVVLPEKSDRFTFSAHAAGDQDDGGRSVGYQGAKVLDPDVGFHVNPVMVFDFASLYPSIIQSNNLCYSTMTHNPAAIAHLEEGTDYLRVEVQGRVFFFVREHVRRSLLAELLTDWLNMRKALRAQIPLAATEDEKVLLDMQQIAIKVICNSVYGFTGVMNGMLPCLEVAATVTAIGRDMLLKTKQYIEENWREYSNIRERFFPAMAHEGVPQYSVAVIYGDTDSVFVSFKGVPVACLVASGDAMAAEITNALFRRPVKLECEKVFTKLLMIAKKKYIGVIHTGKMMMRGVDMVRKSNCRFVNDTAKALLNLVFYDEDVATAAASSALVDVSALPRGLSKLGARVREAHAALSSPALDVRDFVMTSELSKAPKYYASSKLAHLTVYRKKIARNEEPPQVKDRIEYVIIAPGQRIQGDPFREKETDLVSSLAEDPNWVTAHKLRLNADYYFSALLQTLSVTFNAVFGDAKTAHIVMRSFIPDTLRYPAAVRKILAENTKTLTPM.

This sequence belongs to the DNA polymerase type-B family. Forms a complex with the ssDNA-binding protein UL29, the DNA polymerase processivity factor, and the alkaline exonuclease. Interacts with the putative helicase-primase complex subunit UL8; this interaction may coordinate leading and lagging strand DNA synthesis at the replication fork.

Its subcellular location is the host nucleus. The catalysed reaction is DNA(n) + a 2'-deoxyribonucleoside 5'-triphosphate = DNA(n+1) + diphosphate. It carries out the reaction Endonucleolytic cleavage to 5'-phosphomonoester.. Its function is as follows. Replicates viral genomic DNA. The replication complex is composed of six viral proteins: the DNA polymerase, processivity factor, primase, primase-associated factor, helicase, and ssDNA-binding protein. Additionally, the polymerase contains an intrinsic ribonuclease H (RNase H) activity that specifically degrades RNA/DNA heteroduplexes or duplex DNA substrates in the 5' to 3' direction. Therefore, it can catalyze the excision of the RNA primers that initiate the synthesis of Okazaki fragments at a replication fork during viral DNA replication. In Psittacid herpesvirus 1 (isolate Amazon parrot/-/97-0001/1997) (PsHV-1), this protein is DNA polymerase catalytic subunit (UL30).